A 97-amino-acid chain; its full sequence is Aspartyl/glutamyl-tRNA(Asn/Gln) amidotransferase subunit C (97 aa).

It belongs to the GatC family. In terms of assembly, heterotrimer of A, B and C subunits.

The catalysed reaction is L-glutamyl-tRNA(Gln) + L-glutamine + ATP + H2O = L-glutaminyl-tRNA(Gln) + L-glutamate + ADP + phosphate + H(+). It carries out the reaction L-aspartyl-tRNA(Asn) + L-glutamine + ATP + H2O = L-asparaginyl-tRNA(Asn) + L-glutamate + ADP + phosphate + 2 H(+). Its function is as follows. Allows the formation of correctly charged Asn-tRNA(Asn) or Gln-tRNA(Gln) through the transamidation of misacylated Asp-tRNA(Asn) or Glu-tRNA(Gln) in organisms which lack either or both of asparaginyl-tRNA or glutaminyl-tRNA synthetases. The reaction takes place in the presence of glutamine and ATP through an activated phospho-Asp-tRNA(Asn) or phospho-Glu-tRNA(Gln). This Listeria monocytogenes serotype 4b (strain CLIP80459) protein is Aspartyl/glutamyl-tRNA(Asn/Gln) amidotransferase subunit C.